An 823-amino-acid polypeptide reads, in one-letter code: Zygotic DNA replication licensing factor mcm6-A (823 aa).

The C4-type zinc finger occupies 159–186 (CLDCQTLVRDVEQQFKYTQPSICRNPVC). Positions 347 to 554 (LYHNLCTSLF…TDYAIARRIV (208 aa)) constitute an MCM domain. 397–404 (GDPSTAKS) contributes to the ATP binding site. Residues 529 to 532 (SRFD) carry the Arginine finger motif. The disordered stretch occupies residues 663–710 (PDVNLDQDDEHEPEDETQEGTNGDAEVPNGVNGHVNGINGHSQESNAA). Positions 667–680 (LDQDDEHEPEDETQ) are enriched in acidic residues. Positions 691–703 (NGVNGHVNGINGH) are enriched in low complexity.

Belongs to the MCM family. In terms of assembly, component of the mcm2-7 complex (RLF-M). The complex forms a toroidal hexameric ring with the proposed subunit order mcm2-mcm6-mcm4-mcm7-mcm3-mcm5 (By simililarity). Begins to associate with zmcm3, mcm4 and mcm7 into mcm complexes at the neurula stage. May replace mmcm6 in the complex that functions during licensing of DNA replication.

It is found in the nucleus. It catalyses the reaction ATP + H2O = ADP + phosphate + H(+). In terms of biological role, acts as a component of the mcm2-7 complex (mcm complex) which is the putative replicative helicase essential for 'once per cell cycle' DNA replication initiation and elongation in eukaryotic cells. The active ATPase sites in the mcm2-7 ring are formed through the interaction surfaces of two neighboring subunits such that a critical structure of a conserved arginine finger motif is provided in trans relative to the ATP-binding site of the Walker A box of the adjacent subunit. The six ATPase active sites, however, are likely to contribute differentially to the complex helicase activity. The existence of maternal and zygotic forms of mcm3 and mcm6 suggests that specific forms of mcm2-7 complexes may be used during different stages of development. May replace mmcm6 in the mcm2-7 complex. The protein is Zygotic DNA replication licensing factor mcm6-A (zmcm6-a) of Xenopus laevis (African clawed frog).